A 172-amino-acid chain; its full sequence is MLSGKAAYDLFVYGSLQEPEVVYVLLNRVPDHVSAVLSGFHRFRLKGRVYPTILPDGTGKVNGKVLKGITDDELKMLDEFEDVEYDRKTVEVMLTDTSEKLQVETYVWKNKDDPDLYGEWDFEEWRQHDKEDFVTATKKFLENRRLPEAKTRMDTFKTFFKQDLENGKPLDS.

Tyrosine 13 to glutamate 18 contacts substrate. The active-site Proton acceptor is glutamate 81.

It belongs to the gamma-glutamylcyclotransferase family. As to expression, expressed in flowers, leaves, stems and roots.

Putative gamma-glutamylcyclotransferase. The polypeptide is AIG2-like protein C (Arabidopsis thaliana (Mouse-ear cress)).